The primary structure comprises 576 residues: Arginine--tRNA ligase (576 aa).

Positions 122–132 (PNVAKQMHVGH) match the 'HIGH' region motif.

It belongs to the class-I aminoacyl-tRNA synthetase family. In terms of assembly, monomer.

The protein localises to the cytoplasm. It catalyses the reaction tRNA(Arg) + L-arginine + ATP = L-arginyl-tRNA(Arg) + AMP + diphosphate. The polypeptide is Arginine--tRNA ligase (Proteus mirabilis (strain HI4320)).